The primary structure comprises 578 residues: Putative diflavin flavoprotein A 2 (578 aa).

A zinc metallo-hydrolase region spans residues 48-240; sequence RHGTTYNSFL…LQVVLVATGH (193 aa). Fe cation is bound by residues His97, Glu99, Asp101, His164, Asp183, and His240. Residues 269–406 enclose the Flavodoxin-like domain; it reads VALFYVDGYG…LCREAGTDLG (138 aa). Residues 429-578 form a flavodoxin-reductase-like region; it reads IGRLSTGLYI…THHRKLGNHY (150 aa).

This sequence in the N-terminal section; belongs to the zinc metallo-hydrolase group 3 family. The protein in the C-terminal section; belongs to the flavodoxin reductase family. Requires Fe cation as cofactor.

Its function is as follows. Mediates electron transfer from NADH to oxygen, reducing it to water. This modular protein has 3 redox cofactors, in other organisms the same activity requires 2 or 3 proteins. The sequence is that of Putative diflavin flavoprotein A 2 (dfa2) from Synechocystis sp. (strain ATCC 27184 / PCC 6803 / Kazusa).